The primary structure comprises 85 residues: UPF0473 protein CPR_1590 (85 aa).

It belongs to the UPF0473 family.

In Clostridium perfringens (strain SM101 / Type A), this protein is UPF0473 protein CPR_1590.